Here is a 147-residue protein sequence, read N- to C-terminus: Cyanate hydratase (147 aa).

Residues Arg88, Glu91, and Ser114 contribute to the active site.

It belongs to the cyanase family.

The catalysed reaction is cyanate + hydrogencarbonate + 3 H(+) = NH4(+) + 2 CO2. Catalyzes the reaction of cyanate with bicarbonate to produce ammonia and carbon dioxide. The chain is Cyanate hydratase from Polynucleobacter asymbioticus (strain DSM 18221 / CIP 109841 / QLW-P1DMWA-1) (Polynucleobacter necessarius subsp. asymbioticus).